The following is a 932-amino-acid chain: 2-oxoglutarate dehydrogenase E1 component (932 aa).

The protein belongs to the alpha-ketoglutarate dehydrogenase family. Homodimer. Part of the 2-oxoglutarate dehydrogenase (OGDH) complex composed of E1 (2-oxoglutarate dehydrogenase), E2 (dihydrolipoamide succinyltransferase) and E3 (dihydrolipoamide dehydrogenase); the complex contains multiple copies of the three enzymatic components (E1, E2 and E3). The cofactor is thiamine diphosphate.

The catalysed reaction is N(6)-[(R)-lipoyl]-L-lysyl-[protein] + 2-oxoglutarate + H(+) = N(6)-[(R)-S(8)-succinyldihydrolipoyl]-L-lysyl-[protein] + CO2. Its function is as follows. E1 component of the 2-oxoglutarate dehydrogenase (OGDH) complex which catalyzes the decarboxylation of 2-oxoglutarate, the first step in the conversion of 2-oxoglutarate to succinyl-CoA and CO(2). The sequence is that of 2-oxoglutarate dehydrogenase E1 component from Staphylococcus aureus (strain JH9).